Consider the following 386-residue polypeptide: tRNA-specific adenosine deaminase subunit tad2 (386 aa).

The region spanning 212–322 is the CMP/dCMP-type deaminase domain; it reads TQHETYMKLA…GNDRFGGCGS (111 aa). His263 lines the Zn(2+) pocket. The active-site Proton donor is Glu265. Zn(2+)-binding residues include Cys293 and Cys296.

It belongs to the cytidine and deoxycytidylate deaminase family. ADAT2 subfamily. As to quaternary structure, heterodimer with Tad3. It depends on Zn(2+) as a cofactor.

The catalysed reaction is adenosine(34) in tRNA + H2O + H(+) = inosine(34) in tRNA + NH4(+). Its function is as follows. Structural subunit of tRNA-specific adenosine deaminase, which deaminates adenosine-34 (the first, also called wobble position of the anticodon) to inosine in many tRNAs. Inosine-34 allows the decoding of 3 different nucleotides at the third position of mRNA codons, as inosine is able to pair with U, C, and A. The wobble inosine tRNA modification is essential for cell cycle progression in the G1/S and G2/M transitions in fission yeast. In Schizosaccharomyces pombe (strain 972 / ATCC 24843) (Fission yeast), this protein is tRNA-specific adenosine deaminase subunit tad2 (tad2).